Here is a 118-residue protein sequence, read N- to C-terminus: Protein RALF-like 24 (118 aa).

The first 22 residues, 1–22 (MSRSLALVYLSLLCLQTHLSIS), serve as a signal peptide directing secretion. The propeptide at 23-63 (VTVPIPSVNGEIDAMLNRNGVIGEEEGEEMMPSEISRRVMM) is removed in mature form. 2 disulfides stabilise this stretch: C81–C91 and C103–C109.

Belongs to the plant rapid alkalinization factor (RALF) family. Proteolytically cleaved, probably by S1P, a subtilisin-like serine protease (subtilase).

Its subcellular location is the secreted. Cell signaling peptide that may regulate plant stress, growth, and development. Mediates a rapid alkalinization of extracellular space by mediating a transient increase in the cytoplasmic Ca(2+) concentration leading to a calcium-dependent signaling events through a cell surface receptor and a concomitant activation of some intracellular mitogen-activated protein kinases. This chain is Protein RALF-like 24 (RALFL24), found in Arabidopsis thaliana (Mouse-ear cress).